We begin with the raw amino-acid sequence, 91 residues long: Bacterial microcompartment shell vertex protein PduN (91 aa).

Positions 1–87 (MHLARVTGAV…IDLAVVGIVD (87 aa)) constitute a BMV domain.

Belongs to the CcmL/EutN family. In terms of assembly, homopentamer. Interacts with shell protein PduA.

The protein resides in the bacterial microcompartment. It participates in polyol metabolism; 1,2-propanediol degradation. Its function is as follows. Probably forms vertices in the shell of the bacterial microcompartment (BMC) dedicated to 1,2-propanediol (1,2-PD) degradation. Required for structural integrity of BMCs and to mitigate propionaldehyde toxicity. The 1,2-PD-specific bacterial microcompartment (BMC) concentrates low levels of 1,2-PD catabolic enzymes, concentrates volatile reaction intermediates thus enhancing pathway flux and keeps the level of toxic, mutagenic propionaldehyde low. This chain is Bacterial microcompartment shell vertex protein PduN, found in Salmonella typhimurium (strain LT2 / SGSC1412 / ATCC 700720).